The following is a 324-amino-acid chain: tRNA dimethylallyltransferase (324 aa).

Residue 20-27 (GPTASGKS) coordinates ATP. Position 22 to 27 (22 to 27 (TASGKS)) interacts with substrate. Interaction with substrate tRNA regions lie at residues 45 to 48 (DSAL), 168 to 172 (QRLIR), and 284 to 291 (KRQITWLR).

This sequence belongs to the IPP transferase family. In terms of assembly, monomer. It depends on Mg(2+) as a cofactor.

The catalysed reaction is adenosine(37) in tRNA + dimethylallyl diphosphate = N(6)-dimethylallyladenosine(37) in tRNA + diphosphate. In terms of biological role, catalyzes the transfer of a dimethylallyl group onto the adenine at position 37 in tRNAs that read codons beginning with uridine, leading to the formation of N6-(dimethylallyl)adenosine (i(6)A). The sequence is that of tRNA dimethylallyltransferase from Hydrogenovibrio crunogenus (strain DSM 25203 / XCL-2) (Thiomicrospira crunogena).